The chain runs to 137 residues: MHEVRVLAFQKIYSIDINQSAMDDIFDIFNIEDKGLDIENESIKSFYSSLVNGTFNNLEHIDSLIRDISWNWSLDRMDKVDLAILRMGVYSLKFQNFENSKRAVIDDAILIAKKYGSKNSCKFINGILDALLKNMEN.

This sequence belongs to the NusB family.

Functionally, involved in transcription antitermination. Required for transcription of ribosomal RNA (rRNA) genes. Binds specifically to the boxA antiterminator sequence of the ribosomal RNA (rrn) operons. This is Transcription antitermination protein NusB from Borreliella afzelii (strain PKo) (Borrelia afzelii).